We begin with the raw amino-acid sequence, 210 residues long: uncharacterized protein (210 aa).

It is found in the mitochondrion. This is an uncharacterized protein from Schizosaccharomyces pombe (strain 972 / ATCC 24843) (Fission yeast).